Reading from the N-terminus, the 780-residue chain is Carboxysome assembly protein CsoS2 (780 aa).

The segment covering 1-15 (MARLSSRELALERRK) has biased composition (basic and acidic residues). Disordered stretches follow at residues 1 to 173 (MARL…RAIE), 189 to 212 (KHGK…NPDL), 226 to 281 (TKAG…NRSV), 330 to 349 (NRVT…DEPG), and 382 to 444 (SLTQ…TGVT). An N-repeat 1 repeat occupies 5 to 24 (SSRELALERRKALTTSGKKS). Low complexity predominate over residues 48 to 78 (AAAAVEPTAPAVSAPVKPTVSFTPASPSSSS). An N-repeat 2 repeat occupies 86 to 105 (PSRDLVLARRDALSRRGKTA). Basic and acidic residues predominate over residues 86 to 116 (PSRDLVLARRDALSRRGKTADTSRDRNRADV). Residues 117-130 (ARQTQAAAPVAASA) are compositionally biased toward low complexity. N-repeat repeat units lie at residues 175 to 194 (PSRA…GKTA) and 213 to 235 (TSRE…NKQS). M-repeat repeat units follow at residues 260–309 (KVGE…QTFC), 320–369 (KVRV…AAYC), 378–417 (KVGH…GDQY), 431–480 (KVGQ…NAFC), 490–535 (KVGF…LENA), and 541–599 (TSAV…ATAC). The tract at residues 260-608 (KVGESTTSTG…CGNEAPAGTD (349 aa)) is middle region. Residues 264–276 (STTSTGQTVTGTQ) show a composition bias toward low complexity. Low complexity-rich tracts occupy residues 387–403 (GRPV…SVTG) and 432–444 (VGQS…TGVT). A C-terminal domain region spans residues 609-749 (SHGQAPEGAA…ATVPHERKRN (141 aa)). 2 C-repeat repeats span residues 623-669 (SVMS…TEQF) and 693-726 (EQPA…EGVS). Disordered stretches follow at residues 631–661 (AQQQ…LAGG) and 686–780 (AVVS…GARG). Over residues 641–651 (VTGTSYEQGNR) the composition is skewed to polar residues. The span at 709–720 (TGDDWDRGEHVT) shows a compositional bias: basic and acidic residues. Residues 750–780 (EENEWPVSRVTGSSGNTEKGSLITVSGGARG) are C-terminal peptide. The segment covering 759-768 (VTGSSGNTEK) has biased composition (polar residues).

This sequence belongs to the CsoS2 family. As to quaternary structure, interacts via its N-terminal repeats with RuBisCO. Interacts with the major shell protein CsoS1. Unlike H.neapolitanus and predictions for P.marinus strain MIT 9313, this protein is not thought to have ribosomal frameshifting.

Functionally, required for alpha-carboxysome (Cb) assembly, mediates interaction between RuBisCO and the carboxysome shell. The protein is probably intrinsically disordered. The C-terminal repeats act as the encapsulation signal to target proteins to the Cb; they are necessary and sufficient to target both CsoS2 and foreign proteins to the Cb. The N-terminal repeats of this protein bind simultaneously to both subunits of RuBisCO. Probably also interacts with the major shell proteins (CsoS1); that interaction would increase the local concentration of CsoS2 so that it can condense RuBisCO and full carboxysomes can be formed. This chain is Carboxysome assembly protein CsoS2, found in Parasynechococcus marenigrum (strain WH8102).